The sequence spans 189 residues: MQHPASGESWLARPPRTAERRLRPWLTDPASLTARIRMRCGMFGVRVLRQSAGALTPDERRLLGLRAGERALLREVLLIADGRPVVFARSVLAQREQRGGWLRLWRGIGSRPLGAALFSDPRIRRQPLACARIGAADARYHLARRALAGAATLPPALWARRSVFRLHGRSLLVSEFFLPAILGLPDDPL.

The substrate site is built by Arg74, Leu113, and Glu175.

This sequence belongs to the UbiC family.

It is found in the cytoplasm. The catalysed reaction is chorismate = 4-hydroxybenzoate + pyruvate. The protein operates within cofactor biosynthesis; ubiquinone biosynthesis. Removes the pyruvyl group from chorismate, with concomitant aromatization of the ring, to provide 4-hydroxybenzoate (4HB) for the ubiquinone pathway. The sequence is that of Probable chorismate pyruvate-lyase from Azoarcus sp. (strain BH72).